We begin with the raw amino-acid sequence, 268 residues long: MSVSAPLLDAKVRYGRDGWLPLPHTLSDPDVRKLRQRIEGISREQRPEVVLEEGSSAVRALHGCHDFDEVCARLVRLPALVGLAEQLLGGPVYVYQFKVNMKQAHEGAAWPWHQDFAFWHHEDGMGAPDAVNIAIFLDDVTDENGPLEVIPGSQHAGIVEDTARPGRERSHDWRHHVSAKLEYVVPDEIAGRLAGTFGVRRLTGPAGTAVAFHPSIIHSSSNNTSAQRRCVLLITYNRVTNTPAHPVRPPFLVSRDSTPVVPVDADRL.

Residues histidine 113, aspartate 115, and histidine 218 each contribute to the Fe cation site.

The protein belongs to the PhyH family. In terms of assembly, monomer. It depends on Fe(2+) as a cofactor.

It carries out the reaction L-proline + 2-oxoglutarate + O2 = trans-4-hydroxy-L-proline + succinate + CO2. It functions in the pathway antibiotic biosynthesis. Its activity is regulated as follows. Competitively inhibited by pyridine-2,4-dicarboxylate. Inhibited by diethyl pyrocarbonate (DEPC), 3,4-dihydroxybenzoate, pyridine-2,5-dicarboxylate, alpha,alpha'-dipyridyl, and some metal ions such as Co(2+) and Zn(2+). Its function is as follows. Involved in the biosynthesis of the peptidolactone antibiotic etamycin (viridogrisein). Catalyzes the hydroxylation of free L-proline at the C-4 position to yield trans-4-hydroxy-L-proline. The polypeptide is L-proline trans-4-hydroxylase (Streptomyces griseoviridis).